The sequence spans 164 residues: FMHVGLEQLGFNALLQLMIGVPLEMVHGVLRISLLYLAGVLAGSLTVSITDMRAPVVGGSGGVYALCSAHLANVVMNWAGMRCPYKLLRMVLALVCMSSEVGRAVWLRFSPPLPASGPQPSFMAHLAGAVVGVSMGLTILRSYEERLRDQCGWWVVLLAYGTFL.

4 helical membrane-spanning segments follow: residues Gly-10–Leu-30, Ile-32–Met-52, Val-56–Met-76, and Pro-120–Leu-140. The Nucleophile role is filled by Ser-60. Residue His-125 is part of the active site.

It belongs to the peptidase S54 family.

The protein localises to the membrane. The catalysed reaction is Cleaves type-1 transmembrane domains using a catalytic dyad composed of serine and histidine that are contributed by different transmembrane domains.. May be involved in regulated intramembrane proteolysis and the subsequent release of functional polypeptides from their membrane anchors. This chain is Rhomboid-related protein 1 (Rhbdl1), found in Rattus norvegicus (Rat).